Consider the following 333-residue polypeptide: Cap-specific mRNA (nucleoside-2'-O-)-methyltransferase (333 aa).

Position 22 (Y22) interacts with mRNA. S-adenosyl-L-methionine contacts are provided by Q39, Y66, G68, G72, D95, R97, V116, and D138. The segment at 169 to 249 (PVASSLKWRC…NKIVRNKVVI (81 aa)) is binding to NPH-I. K175 (for methyltransferase activity) is an active-site residue. MRNA is bound by residues 177–180 (RCPF), D182, 205–207 (SAE), and E233. A compositionally biased stretch (basic and acidic residues) spans 305 to 320 (SHEPIQRKISSKDSMS). A disordered region spans residues 305 to 333 (SHEPIQRKISSKDSMSKNRNSKRSVRGNK). Positions 323-333 (RNSKRSVRGNK) are enriched in basic residues.

Belongs to the class I-like SAM-binding methyltransferase superfamily. Poxvirus/kinetoplastid 2'-O-MTase family. As to quaternary structure, interacts with poly(A) polymerase catalytic subunit OPG063. Interacts with OPG109 and OPG123; these interactions might help linking transcription to capping and polyadenylation.

It is found in the virion. It catalyses the reaction a 5'-end (N(7)-methyl 5'-triphosphoguanosine)-ribonucleoside in mRNA + S-adenosyl-L-methionine = a 5'-end (N(7)-methyl 5'-triphosphoguanosine)-(2'-O-methyl-ribonucleoside) in mRNA + S-adenosyl-L-homocysteine + H(+). Its function is as follows. Displays methyltransferase, positive regulation of the poly(A) polymerase and transcription elongation activities. Involved in the modification of both mRNA ends and in intermediate and late gene positive transcription elongation. At the mRNAs 5' end, methylates the ribose 2' OH group of the first transcribed nucleotide, thereby producing a 2'-O-methylpurine cap. At the 3' end, functions as a processivity factor which stimulates the activity of the viral poly(A) polymerase OPG063 that creates mRNA's poly(A) tail. In the presence of OPG102, OPG063 does not dissociate from the RNA allowing tail elongation to around 250 adenylates. This is Cap-specific mRNA (nucleoside-2'-O-)-methyltransferase (OPG102) from Cynomys gunnisoni (Gunnison's prairie dog).